The primary structure comprises 450 residues: Adenylosuccinate lyase (450 aa).

Residues Arg9 to Tyr10, His75 to Asp77, and Thr101 to Ser102 each bind N(6)-(1,2-dicarboxyethyl)-AMP. The active-site Proton donor/acceptor is the His149. Gln223 contributes to the N(6)-(1,2-dicarboxyethyl)-AMP binding site. Ser273 functions as the Proton donor/acceptor in the catalytic mechanism. N(6)-(1,2-dicarboxyethyl)-AMP contacts are provided by residues Ser274, Lys279 to Asn281, and Ser318 to Val322.

Belongs to the lyase 1 family. Adenylosuccinate lyase subfamily. In terms of assembly, homotetramer. Residues from neighboring subunits contribute catalytic and substrate-binding residues to each active site.

The catalysed reaction is N(6)-(1,2-dicarboxyethyl)-AMP = fumarate + AMP. The enzyme catalyses (2S)-2-[5-amino-1-(5-phospho-beta-D-ribosyl)imidazole-4-carboxamido]succinate = 5-amino-1-(5-phospho-beta-D-ribosyl)imidazole-4-carboxamide + fumarate. Its pathway is purine metabolism; AMP biosynthesis via de novo pathway; AMP from IMP: step 2/2. The protein operates within purine metabolism; IMP biosynthesis via de novo pathway; 5-amino-1-(5-phospho-D-ribosyl)imidazole-4-carboxamide from 5-amino-1-(5-phospho-D-ribosyl)imidazole-4-carboxylate: step 2/2. In terms of biological role, catalyzes two reactions in de novo purine nucleotide biosynthesis. Catalyzes the breakdown of 5-aminoimidazole- (N-succinylocarboxamide) ribotide (SAICAR or 2-[5-amino-1-(5-phospho-beta-D-ribosyl)imidazole-4-carboxamido]succinate) to 5-aminoimidazole-4-carboxamide ribotide (AICAR or 5-amino-1-(5-phospho-beta-D-ribosyl)imidazole-4-carboxamide) and fumarate, and of adenylosuccinate (ADS or N(6)-(1,2-dicarboxyethyl)-AMP) to adenosine monophosphate (AMP) and fumarate. This Pyrococcus abyssi (strain GE5 / Orsay) protein is Adenylosuccinate lyase (purB).